The following is a 68-amino-acid chain: conotoxin S11.3 (68 aa).

The first 26 residues, methionine 1–threonine 26, serve as a signal peptide directing secretion. Cystine bridges form between cysteine 29/cysteine 43, cysteine 36/cysteine 48, cysteine 42/cysteine 52, and cysteine 47/cysteine 56. Tyrosine 60 carries the tyrosine amide modification. The propeptide occupies alanine 64–glutamate 68.

This sequence belongs to the conotoxin I2 superfamily. In terms of tissue distribution, expressed by the venom duct.

The protein localises to the secreted. The protein is conotoxin S11.3 of Conus striatus (Striated cone).